A 430-amino-acid chain; its full sequence is Serine--tRNA ligase (430 aa).

237-239 (TAE) is an L-serine binding site. 268–270 (RSE) provides a ligand contact to ATP. Glu291 contacts L-serine. Residue 355 to 358 (EISS) coordinates ATP. Ser391 serves as a coordination point for L-serine.

This sequence belongs to the class-II aminoacyl-tRNA synthetase family. Type-1 seryl-tRNA synthetase subfamily. Homodimer. The tRNA molecule binds across the dimer.

The protein localises to the cytoplasm. The catalysed reaction is tRNA(Ser) + L-serine + ATP = L-seryl-tRNA(Ser) + AMP + diphosphate + H(+). It catalyses the reaction tRNA(Sec) + L-serine + ATP = L-seryl-tRNA(Sec) + AMP + diphosphate + H(+). The protein operates within aminoacyl-tRNA biosynthesis; selenocysteinyl-tRNA(Sec) biosynthesis; L-seryl-tRNA(Sec) from L-serine and tRNA(Sec): step 1/1. Functionally, catalyzes the attachment of serine to tRNA(Ser). Is also able to aminoacylate tRNA(Sec) with serine, to form the misacylated tRNA L-seryl-tRNA(Sec), which will be further converted into selenocysteinyl-tRNA(Sec). This Salmonella schwarzengrund (strain CVM19633) protein is Serine--tRNA ligase.